The primary structure comprises 437 residues: GTPase Der (437 aa).

EngA-type G domains are found at residues 3 to 168 (PLIA…PETE) and 178 to 353 (IQLA…QNRS). GTP is bound by residues 9–16 (GRPNVGKS), 56–60 (DTGGY), 120–123 (NKVE), 184–191 (GRPNVGKS), 231–235 (DTAGL), and 296–299 (NKWD). The KH-like domain occupies 354-437 (RKISTSVLNK…VPISMRFMQK (84 aa)).

The protein belongs to the TRAFAC class TrmE-Era-EngA-EngB-Septin-like GTPase superfamily. EngA (Der) GTPase family. Associates with the 50S ribosomal subunit.

Its function is as follows. GTPase that plays an essential role in the late steps of ribosome biogenesis. This is GTPase Der from Pelodictyon phaeoclathratiforme (strain DSM 5477 / BU-1).